Here is a 397-residue protein sequence, read N- to C-terminus: Elongation factor Tu (397 aa).

Residues 10–207 (KPHVNIGTLG…AVDNNIPDPV (198 aa)) form the tr-type G domain. Residues 19 to 26 (GHVDHGKT) are G1. Residue 19 to 26 (GHVDHGKT) coordinates GTP. Threonine 26 serves as a coordination point for Mg(2+). The G2 stretch occupies residues 63–67 (GITIN). The interval 84–87 (DAPG) is G3. Residues 84 to 88 (DAPGH) and 139 to 142 (NKSD) each bind GTP. Residues 139-142 (NKSD) are G4. The G5 stretch occupies residues 177–179 (SGL).

Belongs to the TRAFAC class translation factor GTPase superfamily. Classic translation factor GTPase family. EF-Tu/EF-1A subfamily. Monomer.

The protein localises to the cytoplasm. It catalyses the reaction GTP + H2O = GDP + phosphate + H(+). In terms of biological role, GTP hydrolase that promotes the GTP-dependent binding of aminoacyl-tRNA to the A-site of ribosomes during protein biosynthesis. In Leifsonia xyli subsp. xyli (strain CTCB07), this protein is Elongation factor Tu.